The following is a 131-amino-acid chain: Replicase polyprotein 1ab (131 aa).

The Nidovirus-type SAM-dependent 2'-O-MTase domain maps to Ile1–Ile128.

In terms of biological role, the replicase polyprotein of coronaviruses is a multifunctional protein: it contains the activities necessary for the transcription of negative stranded RNA, leader RNA, subgenomic mRNAs and progeny virion RNA as well as proteinases responsible for the cleavage of the polyprotein into functional products. This is Replicase polyprotein 1ab (rep) from Sus scrofa (Pig).